Consider the following 210-residue polypeptide: FMN-dependent NADH:quinone oxidoreductase 8 (210 aa).

FMN is bound by residues S10 and 16–18; that span reads SIS.

The protein belongs to the azoreductase type 1 family. Homodimer. The cofactor is FMN.

It catalyses the reaction 2 a quinone + NADH + H(+) = 2 a 1,4-benzosemiquinone + NAD(+). The catalysed reaction is N,N-dimethyl-1,4-phenylenediamine + anthranilate + 2 NAD(+) = 2-(4-dimethylaminophenyl)diazenylbenzoate + 2 NADH + 2 H(+). Functionally, quinone reductase that provides resistance to thiol-specific stress caused by electrophilic quinones. Also exhibits azoreductase activity. Catalyzes the reductive cleavage of the azo bond in aromatic azo compounds to the corresponding amines. The chain is FMN-dependent NADH:quinone oxidoreductase 8 from Burkholderia lata (strain ATCC 17760 / DSM 23089 / LMG 22485 / NCIMB 9086 / R18194 / 383).